We begin with the raw amino-acid sequence, 135 residues long: Snaclec echicetin subunit alpha (135 aa).

Positions 1–4 (GADE) are cleaved as a signal peptide. 3 disulfide bridges follow: cysteine 6-cysteine 17, cysteine 34-cysteine 129, and cysteine 104-cysteine 121. Positions 13 to 130 (NGVYCYMLFK…CENTFPFMCK (118 aa)) constitute a C-type lectin domain.

It belongs to the snaclec family. In terms of assembly, heterodimer of subunits alpha and beta; disulfide-linked. Expressed by the venom gland.

Its subcellular location is the secreted. Functionally, binding of echicetin to GPIbalpha (GP1BA) receptor on platelets alone results in inhibition of platelet aggregation, while binding to both GP1BA receptor and IgMk promotes platelet aggregation and signal transduction. This chain is Snaclec echicetin subunit alpha, found in Echis carinatus (Saw-scaled viper).